Consider the following 344-residue polypeptide: Ion-translocating oxidoreductase complex subunit D (344 aa).

The next 4 membrane-spanning stretches (helical) occupy residues 23–43 (LVLG…GPGT), 44–64 (LLNL…MLAL), 77–99 (SALV…WLTL), and 120–140 (PFNP…LEMT). An FMN phosphoryl threonine modification is found at Thr-172. The next 5 membrane-spanning stretches (helical) occupy residues 198–218 (LGSA…LFLL), 222–242 (LFTW…SLLF), 252–272 (GSPL…FIVT), 285–305 (LVFG…GGYP), and 306–326 (DGMA…DYYT).

This sequence belongs to the NqrB/RnfD family. The complex is composed of six subunits: RnfA, RnfB, RnfC, RnfD, RnfE and RnfG. The cofactor is FMN.

It is found in the cell inner membrane. Functionally, part of a membrane-bound complex that couples electron transfer with translocation of ions across the membrane. The protein is Ion-translocating oxidoreductase complex subunit D of Pseudomonas aeruginosa (strain LESB58).